The sequence spans 540 residues: Chaperonin GroEL (540 aa).

Residues 29 to 32 (TLGP), 86 to 90 (DGTTT), Gly-413, 476 to 478 (NAA), and Asp-492 contribute to the ATP site.

This sequence belongs to the chaperonin (HSP60) family. Forms a cylinder of 14 subunits composed of two heptameric rings stacked back-to-back. Interacts with the co-chaperonin GroES.

It localises to the cytoplasm. The catalysed reaction is ATP + H2O + a folded polypeptide = ADP + phosphate + an unfolded polypeptide.. Its function is as follows. Together with its co-chaperonin GroES, plays an essential role in assisting protein folding. The GroEL-GroES system forms a nano-cage that allows encapsulation of the non-native substrate proteins and provides a physical environment optimized to promote and accelerate protein folding. The polypeptide is Chaperonin GroEL (Tsukamurella paurometabola (Corynebacterium paurometabolum)).